We begin with the raw amino-acid sequence, 265 residues long: Hemin import ATP-binding protein HmuV (265 aa).

One can recognise an ABC transporter domain in the interval 10–247 (LVARHLRFQT…ETLAHWYRAD (238 aa)). ATP is bound at residue 42-49 (GPNGAGKS).

It belongs to the ABC transporter superfamily. Heme (hemin) importer (TC 3.A.1.14.5) family. In terms of assembly, the complex is composed of two ATP-binding proteins (HmuV), two transmembrane proteins (HmuU) and a solute-binding protein (HmuT).

The protein localises to the cell inner membrane. Its function is as follows. Part of the ABC transporter complex HmuTUV involved in hemin import. Responsible for energy coupling to the transport system. This is Hemin import ATP-binding protein HmuV from Pectobacterium atrosepticum (strain SCRI 1043 / ATCC BAA-672) (Erwinia carotovora subsp. atroseptica).